Reading from the N-terminus, the 215-residue chain is Intraflagellar transport protein 43 homolog B (215 aa).

The disordered stretch occupies residues 1-107 (MDDHLKLGDS…SDGEGDIPVI (107 aa)).

This sequence belongs to the IFT43 family. Component of IFT complex A.

Component of IFT complex A (IFT-A) involved in retrograde ciliary transport along microtubules from the ciliary tip to the base. In Salmo salar (Atlantic salmon), this protein is Intraflagellar transport protein 43 homolog B (ift43b).